The following is a 364-amino-acid chain: Aminomethyltransferase (364 aa).

It belongs to the GcvT family. In terms of assembly, the glycine cleavage system is composed of four proteins: P, T, L and H.

It catalyses the reaction N(6)-[(R)-S(8)-aminomethyldihydrolipoyl]-L-lysyl-[protein] + (6S)-5,6,7,8-tetrahydrofolate = N(6)-[(R)-dihydrolipoyl]-L-lysyl-[protein] + (6R)-5,10-methylene-5,6,7,8-tetrahydrofolate + NH4(+). Functionally, the glycine cleavage system catalyzes the degradation of glycine. The protein is Aminomethyltransferase of Shewanella putrefaciens (strain CN-32 / ATCC BAA-453).